The following is a 628-amino-acid chain: MBT domain-containing protein 1 (628 aa).

Positions 1-31 are disordered; sequence MFDGYDSCSEDTSSSSSSEESEEEVAPLPSN. The FCS-type zinc finger occupies 45–80; that stretch reads PDGKSGMATCEMCGMVGVRDAFYSKTKRFCSVSCSR. Positions 54, 57, 74, and 78 each coordinate Zn(2+). Lys-115 is modified (N6-acetyllysine). MBT repeat units lie at residues 141–245, 253–350, 351–456, and 464–560; these read FSWG…LVPP, TNWK…IGHR, FKRS…LTPP, and FKWF…LQPP. Disordered regions lie at residues 560 to 590 and 606 to 628; these read PASQ…HKKM and NFLQ…KQEP. The span at 562 to 573 shows a compositional bias: low complexity; sequence SQSSRENQSASS. Residues 574-590 show a composition bias toward basic residues; the sequence is KQKKKAKSQQYKGHKKM. Residues 609-620 are compositionally biased toward polar residues; the sequence is QGASDQESNGSA.

Monomer. Component of the NuA4 histone acetyltransferase complex. Interacts with EPC1; interaction is direct and promotes recruitment of MBTD1 into the NuA4 histone acetyltransferase complex.

It localises to the nucleus. The protein resides in the chromosome. Its function is as follows. Chromatin reader component of the NuA4 histone acetyltransferase complex, a multiprotein complex involved in transcriptional activation of select genes principally by acetylation of nucleosomal histones H4 and H2A. The NuA4 complex plays a direct role in repair of DNA double-strand breaks (DSBs) by promoting homologous recombination (HR). MBTD1 specifically recognizes and binds monomethylated and dimethylated 'Lys-20' on histone H4 (H4K20me1 and H4K20me2, respectively). In the NuA4 complex, MBTD1 promotes recruitment of the complex to H4K20me marks by competing with TP53BP1 for binding to H4K20me. Following recruitment to H4K20me at DNA breaks, the NuA4 complex catalyzes acetylation of 'Lys-15' on histone H2A (H2AK15), blocking the ubiquitination mark required for TP53BP1 localization at DNA breaks, thereby promoting homologous recombination (HR). This is MBT domain-containing protein 1 from Homo sapiens (Human).